Here is a 283-residue protein sequence, read N- to C-terminus: Bifunctional protein FolD (283 aa).

Residues 159 to 161 (GRS), Ser184, and Ile225 contribute to the NADP(+) site.

This sequence belongs to the tetrahydrofolate dehydrogenase/cyclohydrolase family. As to quaternary structure, homodimer.

It catalyses the reaction (6R)-5,10-methylene-5,6,7,8-tetrahydrofolate + NADP(+) = (6R)-5,10-methenyltetrahydrofolate + NADPH. It carries out the reaction (6R)-5,10-methenyltetrahydrofolate + H2O = (6R)-10-formyltetrahydrofolate + H(+). Its pathway is one-carbon metabolism; tetrahydrofolate interconversion. Functionally, catalyzes the oxidation of 5,10-methylenetetrahydrofolate to 5,10-methenyltetrahydrofolate and then the hydrolysis of 5,10-methenyltetrahydrofolate to 10-formyltetrahydrofolate. The polypeptide is Bifunctional protein FolD (Methanoculleus marisnigri (strain ATCC 35101 / DSM 1498 / JR1)).